Consider the following 507-residue polypeptide: MVNIRPDEISNIIRKQIEQYNQEVKVINIGTVLQVGDGIARIYGLDKVMAGELVEFEDGTVGIALNLESDNVGVVLMGDGLSIQEGSSVEATGKIAQIPVSDAYLGRVVNALAQPIDGKGQIPAYEFRLIESPAPGIISRRSVYEPMQTGLIAIDSMIPIGRGQRELIIGDRQTGKTAVATDTILNQKGQNVICVYVAIGQKASSVAQVVNTFEERGALEYTIVVAETADSPATLQYLAPYTGAALAEYFMYRKQHTLIIYDDLSKQAQAYRQMSLLLRRPPGREAYPGDVFYLHSRLLERAAKLSSQLGEGSMTALPIVETQAGDVSAYIPTNVISITDGQIFLSADLFNAGIRPAINVGISVSRVGSAAQIKAMKQVAGKLKLELAQFAELEAFAQFASDLDKATQNQLARGQRLRELLKQSQSAPLAVEEQVATIYTGVNGYLDVLEVEQVKKFLVQLREYLITNKPQFVEIIRSTKVFTEQAEIILKEAIKEHTEFFLLQEQK.

Residue 170–177 participates in ATP binding; the sequence is GDRQTGKT.

Belongs to the ATPase alpha/beta chains family. F-type ATPases have 2 components, CF(1) - the catalytic core - and CF(0) - the membrane proton channel. CF(1) has five subunits: alpha(3), beta(3), gamma(1), delta(1), epsilon(1). CF(0) has four main subunits: a, b, b' and c.

The protein resides in the plastid. The protein localises to the chloroplast thylakoid membrane. It catalyses the reaction ATP + H2O + 4 H(+)(in) = ADP + phosphate + 5 H(+)(out). Its function is as follows. Produces ATP from ADP in the presence of a proton gradient across the membrane. The alpha chain is a regulatory subunit. This is ATP synthase subunit alpha, chloroplastic from Anthoceros angustus (Hornwort).